The chain runs to 156 residues: Transcriptional repressor NrdR (156 aa).

Residues 3 to 34 fold into a zinc finger; sequence CPFCHSDNDKVQDSRTAEAGYVVRRKRLCQTC. One can recognise an ATP-cone domain in the interval 49-139; sequence VRVVKSDETR…VYRDFDDAKD (91 aa).

This sequence belongs to the NrdR family. Zn(2+) serves as cofactor.

Negatively regulates transcription of bacterial ribonucleotide reductase nrd genes and operons by binding to NrdR-boxes. This chain is Transcriptional repressor NrdR, found in Rhodopirellula baltica (strain DSM 10527 / NCIMB 13988 / SH1).